The chain runs to 80 residues: Dermaseptin-DA3 (80 aa).

Residues Met1–Cys22 form the signal peptide. Residues Glu23–Glu42 constitute a propeptide that is removed on maturation. Positions Glu24–Ser48 are disordered. Positions Glu29–Ser40 are enriched in acidic residues. Residue Leu77 is modified to Leucine amide. Residues Glu79–Gln80 constitute a propeptide that is removed on maturation.

Belongs to the frog skin active peptide (FSAP) family. Dermaseptin subfamily. As to expression, expressed by the skin glands.

The protein resides in the secreted. In terms of biological role, possesses a potent antimicrobial activity against Gram-positive and Gram-negative bacteria. Probably acts by disturbing membrane functions with its amphipathic structure. This chain is Dermaseptin-DA3, found in Agalychnis dacnicolor (Giant Mexican leaf frog).